Consider the following 375-residue polypeptide: Homoserine O-succinyltransferase (375 aa).

Residues 48–358 (NAVLVCHALS…PAGHDSFLLD (311 aa)) form the AB hydrolase-1 domain. Ser154 acts as the Nucleophile in catalysis. Arg224 is a substrate binding site. Residues Asp319 and His352 contribute to the active site. A substrate-binding site is contributed by Asp353.

Belongs to the AB hydrolase superfamily. MetX family. In terms of assembly, homodimer.

It localises to the cytoplasm. The catalysed reaction is L-homoserine + succinyl-CoA = O-succinyl-L-homoserine + CoA. The protein operates within amino-acid biosynthesis; L-methionine biosynthesis via de novo pathway; O-succinyl-L-homoserine from L-homoserine: step 1/1. Its function is as follows. Transfers a succinyl group from succinyl-CoA to L-homoserine, forming succinyl-L-homoserine. The protein is Homoserine O-succinyltransferase of Azoarcus sp. (strain BH72).